The primary structure comprises 727 residues: Prolyl endopeptidase-like (727 aa).

Residues S559, D645, and H690 each act as charge relay system in the active site.

The protein belongs to the peptidase S9A family. In terms of assembly, homodimer. Interacts with the AP-1 complex.

Its subcellular location is the cytoplasm. It is found in the cytosol. It localises to the golgi apparatus. The protein resides in the trans-Golgi network. The protein localises to the cytoskeleton. Its subcellular location is the nucleus. Its function is as follows. Serine peptidase whose precise substrate specificity remains unclear. Does not cleave peptides after a arginine or lysine residue. Regulates trans-Golgi network morphology and sorting by regulating the membrane binding of the AP-1 complex. May play a role in the regulation of synaptic vesicle exocytosis. The protein is Prolyl endopeptidase-like (PREPL) of Macaca fascicularis (Crab-eating macaque).